The chain runs to 161 residues: Allophycocyanin subunit alpha-B (161 aa).

Asn-71 carries the post-translational modification N4-methylasparagine. (2R,3E)-phycocyanobilin is bound at residue Cys-81.

The protein belongs to the phycobiliprotein family. Heterodimer of an alpha-B and a beta chain forming AP-B. Contains one covalently linked bilin chromophore. The chromophore is added by phycocyanobilin lyase CpcUS.

The protein resides in the cellular thylakoid membrane. Its function is as follows. A variant alpha-allophycocyanin (AP) which forms a complex with beta-AP with maximum absorption at approximately 670 nanometers. It is an important phycobilisome terminal emitter involved in energy transfer to photosystem I. This chain is Allophycocyanin subunit alpha-B (apcD), found in Picosynechococcus sp. (strain ATCC 27264 / PCC 7002 / PR-6) (Agmenellum quadruplicatum).